A 354-amino-acid polypeptide reads, in one-letter code: Uroporphyrinogen decarboxylase (354 aa).

Residues 27-31, aspartate 77, tyrosine 154, threonine 209, and histidine 327 contribute to the substrate site; that span reads RQAGR.

The protein belongs to the uroporphyrinogen decarboxylase family. Homodimer.

The protein resides in the cytoplasm. The enzyme catalyses uroporphyrinogen III + 4 H(+) = coproporphyrinogen III + 4 CO2. Its pathway is porphyrin-containing compound metabolism; protoporphyrin-IX biosynthesis; coproporphyrinogen-III from 5-aminolevulinate: step 4/4. Catalyzes the decarboxylation of four acetate groups of uroporphyrinogen-III to yield coproporphyrinogen-III. This is Uroporphyrinogen decarboxylase from Pectobacterium atrosepticum (strain SCRI 1043 / ATCC BAA-672) (Erwinia carotovora subsp. atroseptica).